The primary structure comprises 848 residues: Protein NETWORKED 2C (848 aa).

Residues 10-90 (YSWWWASHVR…ERYDHISKEL (81 aa)) enclose the NAB domain. Residues 108–141 (FAMNEDDDDDAPVSPRHHKNKTSNKNVPKVPDLP) form a disordered region. 4 coiled-coil regions span residues 172 to 204 (LSKTEAVEEIDKLQKEILVLQTEKEFVKTSYEN), 241 to 278 (EAQILMSTTALKSCQEKLEELRDKQEQNVKEVDVSRKQ), 305 to 454 (SEKE…KATN), and 752 to 797 (AKFE…SEEF).

This sequence belongs to the NET family.

Plant-specific actin binding protein. May be part of a membrane-cytoskeletal adapter complex. This chain is Protein NETWORKED 2C, found in Arabidopsis thaliana (Mouse-ear cress).